A 432-amino-acid polypeptide reads, in one-letter code: MSSTFFTCNCCVIQFKTSDLQRYHMKTEWHRYNLKRRIANLPPIGAEQFAEKLQISEKEQAENQVDEFGFPVLKPVMNQSNALPQKQKKPIKSKRGRKVGTNLLKRKDRDIAKEKQNRSVSPSGSISSQLSNLTVGTENTNTDYGEDTVSEYGFTSDSNYEYATSDEELDIADKPSDKENEKITITECIYCGKDNKEVERNVKHMFSEHGLFIPERSYLIDLNGLLEFLIKMIVIDHNCLCCNFHGSGLESIRAHMASKRHCRLPYETKEERQLFAPFYDFTYDDHSISKNLQNDRAITSKLSSVYGAKNDEEDGEVDITLVSSENDINANYTTVSIDESGLELTLPTGARLGHRAGQRYYRQNLPSQPNPNESRRTITAADRRMVSGVTEKQYKKGMKKMQQLEKNAINTQIRREIKRVNFQTHYRDELLQ.

The C2H2-type 1 zinc-finger motif lies at 6-30; that stretch reads FTCNCCVIQFKTSDLQRYHMKTEWH. Residues 79-150 form a disordered region; the sequence is QSNALPQKQK…NTDYGEDTVS (72 aa). The segment covering 86-98 has biased composition (basic residues); the sequence is KQKKPIKSKRGRK. Over residues 105 to 117 the composition is skewed to basic and acidic residues; that stretch reads KRKDRDIAKEKQN. A compositionally biased stretch (polar residues) spans 118–143; that stretch reads RSVSPSGSISSQLSNLTVGTENTNTD. 2 consecutive C2H2-type zinc fingers follow at residues 186-209 and 237-261; these read TECIYCGKDNKEVERNVKHMFSEH and HNCLCCNFHGSGLESIRAHMASKRH.

It belongs to the REI1 family. Associates with nascent pre-60S particles that have not yet entered the translating pool, and is released from mature 60S subunits. Interacts with pre-60S factors NMD3, LSG1, and TIF6.

The protein resides in the cytoplasm. Functionally, pre-60S-associated cytoplasmic factor involved in the cytoplasmic maturation of the 60S subunit. May act redundantly with REI1 to directly promote a stabilizing structural rearrangement in cytoplasmic 60S subunit maturation independent on the REI1-specific ARX1 recycling. The protein is Cytoplasmic 60S subunit biogenesis factor REH1 (REH1) of Saccharomyces cerevisiae (strain ATCC 204508 / S288c) (Baker's yeast).